The chain runs to 371 residues: MAQNKPNAFMAFVADWRACNRFGRGLSTSEAVAKCGPIWEGMSDRERGPYKSKAKDSNVLERESKTERLNCPGVAFSKMQVEKNEAIDAELQMKRNIKRIVLKATNSMKLEEEEFLFVSFNYFTKALNGDVYQPAELSACRFSLKGGISSNYSTMINPGHIIFGQTSDAQDHSRTTHKLPLPPNAMGEKNLGNLYSDTLKWLSASNDEEDEQYDHPVIVYTTPELMPVVKSCFRYLACEGDTDKHAKKIIVYDICYLFLTLKKTVLDLVGVPSDHMNIHVTNSFFRRDFFEFSSGIACDYHEEVDRTKYCTKSMVLRWGYMISHYICGDLAIPLQPRKHVPIEVKHSYTVTPGDSSLALDGTSTDSGYSGY.

Positions 2 to 68 (AQNKPNAFMA…VLERESKTER (67 aa)) form a DNA-binding region, HMG box.

It belongs to the maelstrom family.

It is found in the cytoplasm. The protein resides in the nucleus. In terms of biological role, involved both in the piRNA and miRNA metabolic processes. As a component of the meiotic nuage, plays a central role during oogenesis by repressing transposable elements and preventing their mobilization, which is essential for the germline integrity. Repression of transposable elements is mediated via the piRNA metabolic process, which mediates the repression of transposable elements during meiosis by forming complexes composed of piRNAs and Piwi proteins and governs the repression of transposons. As a nuclear component, it is required for proper differentiation in the germline stem cell (GSC) lineage by repressing microRNA-7 (miR-7), thereby acting as an indirect regulator of bag-of-marbles (Bam). Acts by binding to the promoter of miR-7 gene and repressing its expression; miR-7 repression alleviates the Bam repression by miR-7, thereby allowing differentiation in the germline stem cell (GSC) lineage. In Drosophila pseudoobscura pseudoobscura (Fruit fly), this protein is Protein maelstrom 1 (mael1).